Here is a 448-residue protein sequence, read N- to C-terminus: MRSAVVLALLLCAGQVIALPVNSPMDTGDTEVMKCIVEVISDTLSKPSPVPVSQECFETLRGDERILSILRHQNLLKELQDLALQGAKERAPQQKHSRLEDELAEVLEKQNHQAELKEVTEEALSEDAAEARGDSKEVEENGEDADGARPQAALEPEQESRVEDAQAPGEEKEAINTHSPTRLPSQKHPDPQAEGDSDSPSQGLVDREKGLGAERGQQAKREEEEDEAGEKADAEEEGPTAAFNPHPSLSYKIRKGESWSEALVVDGARKTGAEEAQPPEGQGEREHSRQEEEEEEETAGASRGLFRGGKSRELEQEKEQERLSKEWEDAKRWSKMDQLAKELTAEKRLEGEDEEEDDPDRSMKLSFRARAYGFRGPGLQLRRGWRPSSREDSIEAGLPPPVRGYPEEKKEEEGSANRRPEDQELESLSAIEAELEKVAHQLQALRRG.

An N-terminal signal peptide occupies residues 1-18; the sequence is MRSAVVLALLLCAGQVIA. An intrachain disulfide couples Cys35 to Cys56. A disordered region spans residues 116-251; the sequence is LKEVTEEALS…AFNPHPSLSY (136 aa). Composition is skewed to basic and acidic residues over residues 129 to 139 and 158 to 175; these read AEARGDSKEVE and QESR…KEAI. Ser197 is modified (phosphoserine). Residues 205–222 show a composition bias toward basic and acidic residues; the sequence is VDREKGLGAERGQQAKRE. The segment covering 223 to 238 has biased composition (acidic residues); sequence EEEDEAGEKADAEEEG. Phosphoserine is present on residues Ser258 and Ser288. The disordered stretch occupies residues 263-429; sequence LVVDGARKTG…PEDQELESLS (167 aa). Gly308 carries the glycine amide modification. The span at 310–350 shows a compositional bias: basic and acidic residues; that stretch reads KSRELEQEKEQERLSKEWEDAKRWSKMDQLAKELTAEKRLE. Phosphoserine occurs at positions 311, 324, and 362. Methionine sulfoxide is present on Met363. 4 positions are modified to phosphoserine: Ser389, Ser393, Ser415, and Ser429. A compositionally biased stretch (basic and acidic residues) spans 405–422; it reads YPEEKKEEEGSANRRPED. O-linked (Xyl...) (chondroitin sulfate) serine glycosylation is present at Ser415.

It belongs to the chromogranin/secretogranin protein family. In terms of assembly, self-interacts; self-assembly is promoted in vitro by chondroitin sulfate attachment which occurs at mildly acidic pH conditions. Interacts with SCG3. Interacts with ITPR1 in the secretory granules. In terms of processing, O-glycosylated; contains chondroitin sulfate (CS). CS attachment is pH-dependent, being observed at mildly acidic conditions of pH 5 but not at neutral pH, and promotes self-assembly in vitro. In terms of tissue distribution, highly expressed in adrenal medulla and pituitary gland. Weaker expression detected in cerebrum, cerebellum, spinal cord, liver, thyroid gland, striated muscle, lung, spleen, kidney, parotid gland, and sublingual gland.

It is found in the secreted. Its subcellular location is the cytoplasmic vesicle. The protein resides in the secretory vesicle. The protein localises to the neuronal dense core vesicle. Strongly inhibits glucose induced insulin release from the pancreas. Functionally, inhibits catecholamine release from chromaffin cells and noradrenergic neurons by acting as a non-competitive nicotinic cholinergic antagonist. Can induce mast cell migration, degranulation and production of cytokines and chemokines. In terms of biological role, regulates granule biogenesis in endocrine cells by up-regulating the transcription of protease nexin 1 (SERPINE2) via a cAMP-PKA-SP1 pathway. This leads to inhibition of granule protein degradation in the Golgi complex which in turn promotes granule formation. The polypeptide is Chromogranin-A (CHGA) (Equus caballus (Horse)).